We begin with the raw amino-acid sequence, 89 residues long: Small ribosomal subunit protein uS15 (89 aa).

The segment covering 1–21 (MAITQERKNQLISEFKTHESD) has biased composition (basic and acidic residues). The tract at residues 1 to 23 (MAITQERKNQLISEFKTHESDTG) is disordered.

Belongs to the universal ribosomal protein uS15 family. In terms of assembly, part of the 30S ribosomal subunit. Forms a bridge to the 50S subunit in the 70S ribosome, contacting the 23S rRNA.

One of the primary rRNA binding proteins, it binds directly to 16S rRNA where it helps nucleate assembly of the platform of the 30S subunit by binding and bridging several RNA helices of the 16S rRNA. Its function is as follows. Forms an intersubunit bridge (bridge B4) with the 23S rRNA of the 50S subunit in the ribosome. The protein is Small ribosomal subunit protein uS15 of Bacillus velezensis (strain DSM 23117 / BGSC 10A6 / LMG 26770 / FZB42) (Bacillus amyloliquefaciens subsp. plantarum).